The sequence spans 132 residues: Small ribosomal subunit protein uS8 (132 aa).

Belongs to the universal ribosomal protein uS8 family. In terms of assembly, part of the 30S ribosomal subunit. Contacts proteins S5 and S12.

Its function is as follows. One of the primary rRNA binding proteins, it binds directly to 16S rRNA central domain where it helps coordinate assembly of the platform of the 30S subunit. In Streptococcus mutans serotype c (strain ATCC 700610 / UA159), this protein is Small ribosomal subunit protein uS8.